The following is a 195-amino-acid chain: Thymidine kinase (195 aa).

ATP contacts are provided by residues 9-16 (ATMNAGKS) and 89-92 (DEAQ). Glu-90 serves as the catalytic Proton acceptor. Positions 147, 149, 184, and 187 each coordinate Zn(2+).

It belongs to the thymidine kinase family. In terms of assembly, homotetramer.

It is found in the cytoplasm. It catalyses the reaction thymidine + ATP = dTMP + ADP + H(+). The polypeptide is Thymidine kinase (Rhizobium meliloti (strain 1021) (Ensifer meliloti)).